Consider the following 122-residue polypeptide: Large ribosomal subunit protein uL14 (122 aa).

The protein belongs to the universal ribosomal protein uL14 family. In terms of assembly, part of the 50S ribosomal subunit. Forms a cluster with proteins L3 and L19. In the 70S ribosome, L14 and L19 interact and together make contacts with the 16S rRNA in bridges B5 and B8.

Functionally, binds to 23S rRNA. Forms part of two intersubunit bridges in the 70S ribosome. This is Large ribosomal subunit protein uL14 from Leuconostoc mesenteroides subsp. mesenteroides (strain ATCC 8293 / DSM 20343 / BCRC 11652 / CCM 1803 / JCM 6124 / NCDO 523 / NBRC 100496 / NCIMB 8023 / NCTC 12954 / NRRL B-1118 / 37Y).